An 875-amino-acid polypeptide reads, in one-letter code: Lysine-specific demethylase JMJ26 (875 aa).

Positions 31 to 103 (KPVEATSLSS…RSSVKKRATT (73 aa)) are disordered. Positions 62 to 69 (RKRSKADE) match the Nuclear localization signal motif. Residues 79–93 (KCDDENKCEENEKKQ) show a composition bias toward basic and acidic residues. Residues C193, C196, C207, C210, C216, C219, C236, C239, C322, C325, C339, and C347 each coordinate Zn(2+). An RING-type; degenerate zinc finger spans residues 193–240 (CHQCSKGERRYLFICTFCEVRLYCFPCIKKWYPHLSTDDILEKCPFCR). The segment at 317-347 (EERVFCNHCATSIVDLHRSCPKCSYELCLNC) adopts a B box-type; degenerate zinc-finger fold. The 224-residue stretch at 614–837 (PRSGILNIAT…ECLRLTDEFR (224 aa)) folds into the JmjC domain. Fe cation contacts are provided by H658, D660, and H805.

This sequence belongs to the JARID1 histone demethylase family. Requires Fe(2+) as cofactor. As to expression, expressed in inflorescences, roots, siliques, leaves and stems.

Its subcellular location is the nucleus. Functionally, may function as histone H3 lysine demethylase and be involved in regulation of gene expression. The protein is Lysine-specific demethylase JMJ26 of Arabidopsis thaliana (Mouse-ear cress).